The sequence spans 161 residues: Ragulator complex protein LAMTOR1 (161 aa).

Positions 1 to 43 (MGCCYSSENEDSDQDREERKLLLDPSSTPTKALNGAEPNYHSL) are disordered. Residue G2 is the site of N-myristoyl glycine attachment. 2 S-palmitoyl cysteine lipidation sites follow: C3 and C4. A Glycyl lysine isopeptide (Lys-Gly) (interchain with G-Cter in ubiquitin) cross-link involves residue K20. S27 is subject to Phosphoserine. Residue T28 is modified to Phosphothreonine. K31 participates in a covalent cross-link: Glycyl lysine isopeptide (Lys-Gly) (interchain with G-Cter in ubiquitin). A phosphoserine mark is found at S42 and S56. K60 is covalently cross-linked (Glycyl lysine isopeptide (Lys-Gly) (interchain with G-Cter in ubiquitin)). Position 98 is a phosphoserine (S98). Glycyl lysine isopeptide (Lys-Gly) (interchain with G-Cter in ubiquitin) cross-links involve residues K103 and K104. The interval 121–161 (SEPIPFSDLQQVSRIAAYAYSALSQIRVDAKEELVVQFGIP) is interaction with LAMTOR2 and LAMTOR3. At S141 the chain carries Phosphoserine.

Belongs to the LAMTOR1 family. As to quaternary structure, part of the Ragulator complex composed of LAMTOR1, LAMTOR2, LAMTOR3, LAMTOR4 and LAMTOR5. LAMTOR4 and LAMTOR5 form a heterodimer that interacts, through LAMTOR1, with a LAMTOR2, LAMTOR3 heterodimer. Interacts with LAMTOR2 and LAMTOR3; the interaction is direct. The Ragulator complex interacts with both the mTORC1 complex and heterodimers constituted of the Rag GTPases RagA/RRAGA, RagB/RRAGB, RagC/RRAGC and RagD/RRAGD; regulated by amino acid availability. The Ragulator complex interacts with SLC38A9; the probable amino acid sensor. Component of the lysosomal folliculin complex (LFC), composed of FLCN, FNIP1 (or FNIP2), RagA/RRAGA or RagB/RRAGB GDP-bound, RagC/RRAGC or RagD/RRAGD GTP-bound, and Ragulator. Associates with the lysosomal V-ATPase complex; interaction promotes the guanine nucleotide exchange factor (GEF) of the Ragulator complex. Interacts with MMP14. Interacts with CDKN1B; prevents the interaction of CDKN1B with RHOA leaving RHOA in a form accessible to activation by ARHGEF2. Interacts with PIP4P1. In terms of processing, N-terminal myristoylation and palmitoylation mediates its recruitment to lysosome membranes, thereby promoting localization of the Ragulator complex to lysosomes. N-myristoylation by NMT1 is required for palmitoylation at Cys-3 and Cys-4. Ubiquitinated at Lys-60, Lys-103 and Lys-104 by UBE3A in neurons, promoting its degradation by the proteasome, thereby limiting mTORC1 signaling and activity-dependent synaptic remodeling. Ubiquitination at Lys-20 impairs the association with the lysosomal V-ATPase complex. Deubiquitination at Lys-20 by USP32 promotes the association with the lysosomal V-ATPase complex and subsequent activation of the mTORC1 complex.

It is found in the lysosome membrane. The protein resides in the late endosome membrane. In terms of biological role, key component of the Ragulator complex, a multiprotein complex involved in amino acid sensing and activation of mTORC1, a signaling complex promoting cell growth in response to growth factors, energy levels, and amino acids. Activated by amino acids through a mechanism involving the lysosomal V-ATPase, the Ragulator plays a dual role for the small GTPases Rag (RagA/RRAGA, RagB/RRAGB, RagC/RRAGC and/or RagD/RRAGD): it (1) acts as a guanine nucleotide exchange factor (GEF), activating the small GTPases Rag and (2) mediates recruitment of Rag GTPases to the lysosome membrane. Activated Ragulator and Rag GTPases function as a scaffold recruiting mTORC1 to lysosomes where it is in turn activated. LAMTOR1 is directly responsible for anchoring the Ragulator complex to the lysosomal membrane. LAMTOR1 wraps around the other subunits of the Ragulator complex to hold them in place and interacts with the Rag GTPases, thereby playing a key role in the recruitment of the mTORC1 complex to lysosomes. Also involved in the control of embryonic stem cells differentiation via non-canonical RagC/RRAGC and RagD/RRAGD activation: together with FLCN, it is necessary to recruit and activate RagC/RRAGC and RagD/RRAGD at the lysosomes, and to induce exit of embryonic stem cells from pluripotency via non-canonical, mTOR-independent TFE3 inactivation. Also required for late endosomes/lysosomes biogenesis it may regulate both the recycling of receptors through endosomes and the MAPK signaling pathway through recruitment of some of its components to late endosomes. May be involved in cholesterol homeostasis regulating LDL uptake and cholesterol release from late endosomes/lysosomes. May also play a role in RHOA activation. In Mus musculus (Mouse), this protein is Ragulator complex protein LAMTOR1.